We begin with the raw amino-acid sequence, 335 residues long: DNA-directed RNA polymerase subunit alpha (335 aa).

Residues 1–233 (MMLNATEFLT…QQISIFVDLE (233 aa)) are alpha N-terminal domain (alpha-NTD). Residues 247–335 (VDPVLLRPVD…VDDRFSYRSR (89 aa)) are alpha C-terminal domain (alpha-CTD).

The protein belongs to the RNA polymerase alpha chain family. Homodimer. The RNAP catalytic core consists of 2 alpha, 1 beta, 1 beta' and 1 omega subunit. When a sigma factor is associated with the core the holoenzyme is formed, which can initiate transcription.

It catalyses the reaction RNA(n) + a ribonucleoside 5'-triphosphate = RNA(n+1) + diphosphate. DNA-dependent RNA polymerase catalyzes the transcription of DNA into RNA using the four ribonucleoside triphosphates as substrates. This Psychrobacter arcticus (strain DSM 17307 / VKM B-2377 / 273-4) protein is DNA-directed RNA polymerase subunit alpha.